The following is a 275-amino-acid chain: Formamidopyrimidine-DNA glycosylase (275 aa).

Residue Pro-2 is the Schiff-base intermediate with DNA of the active site. Glu-3 (proton donor) is an active-site residue. The active-site Proton donor; for beta-elimination activity is the Lys-60. 2 residues coordinate DNA: His-93 and Arg-112. The FPG-type zinc finger occupies 240-274 (FVYGRKDEPCKKCGSPIEKTVVGGRGTHFCIKCQK). Arg-264 serves as the catalytic Proton donor; for delta-elimination activity.

The protein belongs to the FPG family. In terms of assembly, monomer. It depends on Zn(2+) as a cofactor.

The catalysed reaction is Hydrolysis of DNA containing ring-opened 7-methylguanine residues, releasing 2,6-diamino-4-hydroxy-5-(N-methyl)formamidopyrimidine.. It catalyses the reaction 2'-deoxyribonucleotide-(2'-deoxyribose 5'-phosphate)-2'-deoxyribonucleotide-DNA = a 3'-end 2'-deoxyribonucleotide-(2,3-dehydro-2,3-deoxyribose 5'-phosphate)-DNA + a 5'-end 5'-phospho-2'-deoxyribonucleoside-DNA + H(+). In terms of biological role, involved in base excision repair of DNA damaged by oxidation or by mutagenic agents. Acts as a DNA glycosylase that recognizes and removes damaged bases. Has a preference for oxidized purines, such as 7,8-dihydro-8-oxoguanine (8-oxoG). Has AP (apurinic/apyrimidinic) lyase activity and introduces nicks in the DNA strand. Cleaves the DNA backbone by beta-delta elimination to generate a single-strand break at the site of the removed base with both 3'- and 5'-phosphates. The protein is Formamidopyrimidine-DNA glycosylase of Bacillus licheniformis (strain ATCC 14580 / DSM 13 / JCM 2505 / CCUG 7422 / NBRC 12200 / NCIMB 9375 / NCTC 10341 / NRRL NRS-1264 / Gibson 46).